A 502-amino-acid chain; its full sequence is ATP synthase subunit beta, chloroplastic (502 aa).

The residue at position 17 (serine 17) is a Phosphoserine. Position 176-183 (176-183 (GGAGVGKT)) interacts with ATP.

It belongs to the ATPase alpha/beta chains family. F-type ATPases have 2 components, CF(1) - the catalytic core - and CF(0) - the membrane proton channel. CF(1) has five subunits: alpha(3), beta(3), gamma(1), delta(1), epsilon(1). CF(0) has four main subunits: a(1), b(1), b'(1) and c(9-12).

It is found in the plastid. The protein localises to the chloroplast thylakoid membrane. The enzyme catalyses ATP + H2O + 4 H(+)(in) = ADP + phosphate + 5 H(+)(out). In terms of biological role, produces ATP from ADP in the presence of a proton gradient across the membrane. The catalytic sites are hosted primarily by the beta subunits. In Lepidium virginicum (Virginia pepperweed), this protein is ATP synthase subunit beta, chloroplastic.